A 177-amino-acid chain; its full sequence is UBA-like domain-containing protein 1 (177 aa).

Positions 89–177 (ESFHSGGSGS…RAHPAMEAER (89 aa)) are disordered. Positions 112–138 (PHAATSSSAASSWPTAASPPGGPQHHQ) are enriched in low complexity. The segment covering 139 to 151 (PQPPLWTPTPPSP) has biased composition (pro residues). Residues 167-177 (PRAHPAMEAER) show a composition bias toward basic and acidic residues.

The protein belongs to the UBALD family.

This chain is UBA-like domain-containing protein 1 (UBALD1), found in Homo sapiens (Human).